Reading from the N-terminus, the 325-residue chain is Chain length determinant protein (325 aa).

Residues 1–31 (MRVENNNVSGQNLDPEQIDLIDLLVQLWRGK) lie on the Cytoplasmic side of the membrane. A helical transmembrane segment spans residues 32–52 (MTIIISVIVAIVLAIGYLVVA). Residues 53–294 (KEKWTSTAIV…LPIRRDSPKK (242 aa)) are Periplasmic-facing. A helical membrane pass occupies residues 295–315 (AITLILAVLLGGMVGAGIVLG). Residues 316–325 (RNALRNYNAK) are Cytoplasmic-facing.

Belongs to the WzzB/Cld/Rol family.

The protein localises to the cell inner membrane. It functions in the pathway bacterial outer membrane biogenesis; lipopolysaccharide biosynthesis. Functionally, confers a modal distribution of chain length on the O-antigen component of lipopolysaccharide (LPS). Gives rise to a reduced number of short chain molecules and increases in numbers of longer molecules, with a modal value of 13 (in strain O111/M92) and of 17 (in strain K12). This is Chain length determinant protein (wzzB) from Escherichia coli.